The sequence spans 605 residues: Elongation factor 4 (605 aa).

The region spanning 11–193 (KNIRNFSIIA…RLVDVIPAPE (183 aa)) is the tr-type G domain. GTP is bound by residues 23–28 (DHGKST) and 140–143 (NKID).

The protein belongs to the TRAFAC class translation factor GTPase superfamily. Classic translation factor GTPase family. LepA subfamily.

Its subcellular location is the cell inner membrane. The enzyme catalyses GTP + H2O = GDP + phosphate + H(+). In terms of biological role, required for accurate and efficient protein synthesis under certain stress conditions. May act as a fidelity factor of the translation reaction, by catalyzing a one-codon backward translocation of tRNAs on improperly translocated ribosomes. Back-translocation proceeds from a post-translocation (POST) complex to a pre-translocation (PRE) complex, thus giving elongation factor G a second chance to translocate the tRNAs correctly. Binds to ribosomes in a GTP-dependent manner. The chain is Elongation factor 4 from Acinetobacter baylyi (strain ATCC 33305 / BD413 / ADP1).